Reading from the N-terminus, the 3172-residue chain is Erythronolide synthase EryA3 (3172 aa).

The 415-residue stretch at 38 to 452 (GEPIAIVGMA…GTNAHVIVEE (415 aa)) folds into the Ketosynthase family 3 (KS3) 1 domain. Module stretches follow at residues 41–1464 (IAIV…DHYL) and 1492–2891 (IAIV…DHIG). Cys199 acts as the Acyl-thioester intermediate; for beta-ketoacyl synthase 1 activity in catalysis. Residues His334 and His374 each act as for beta-ketoacyl synthase 1 activity in the active site. The interval 557–874 (VFPGQGAQWQ…LGEAYAQGVE (318 aa)) is acyltransferase 1. Ser643 functions as the Acyl-ester intermediate; for acyltransferase 1 activity in the catalytic mechanism. The tract at residues 1117–1294 (GTVLVTGGTG…VTSIAWGLWA (178 aa)) is beta-ketoacyl reductase 1. NADP(+) is bound by residues 1125–1128 (TGGI), 1148–1151 (GRRG), 1177–1178 (DV), Lys1229, and 1249–1250 (FS). Tyr1264 serves as the catalytic Acyl-ester intermediate; for beta-ketoacyl reductase 1 activity. The 76-residue stretch at 1392–1467 (EHLAHLIRAE…RLADHYLERL (76 aa)) folds into the Carrier 1 domain. Ser1427 is modified (O-(pantetheine 4'-phosphoryl)serine). The 428-residue stretch at 1489–1916 (DDPIAIVGMA…GTNAHVIIAE (428 aa)) folds into the Ketosynthase family 3 (KS3) 2 domain. Catalysis depends on Cys1661, which acts as the Acyl-thioester intermediate; for beta-ketoacyl synthase 2 activity. Residues His1797 and His1837 each act as for beta-ketoacyl synthase 2 activity in the active site. The acyltransferase 2 stretch occupies residues 2022 to 2331 (VFVFPGQGAQ…LARAHVHGVA (310 aa)). The active-site Acyl-ester intermediate; for acyltransferase 2 activity is the Ser2112. A beta-ketoacyl reductase 2 region spans residues 2557 to 2731 (GTALVTGGTG…ATSVAWGAWA (175 aa)). NADP(+) contacts are provided by residues 2565–2568 (TGAL), 2588–2591 (SRRG), 2617–2618 (DV), Lys2666, and 2686–2687 (FS). The active-site Acyl-ester intermediate; for beta-ketoacyl reductase 2 activity is the Tyr2701. In terms of domain architecture, Carrier 2 spans 2819-2894 (QELLEFTHSH…RLADHIGQQL (76 aa)). O-(pantetheine 4'-phosphoryl)serine is present on Ser2854. The tract at residues 2960–3166 (ICCAGTAAIS…DAIARHIDAW (207 aa)) is thioesterase. Thr2965 contributes to the substrate binding site. The active-site Nucleophile; for thioesterase activity is the Ser3031. Ala3032 and Asp3058 together coordinate substrate. The active-site Proton acceptor; for thioesterase activity is His3148.

As to quaternary structure, homodimer. Erythronolide synthase is composed of EryAI, EryAII and EryAIII multimodular (2 modules) polypeptides each coding for a functional synthase subunit which participates in 2 of the six FAS-like elongation steps required for formation of the polyketide. Module 1, 2, 3, 4, 5, and 6 participating in biosynthesis steps 1, 2, 3, 4, 5, and 6, respectively. The cofactor is pantetheine 4'-phosphate.

The enzyme catalyses 6 (S)-methylmalonyl-CoA + propanoyl-CoA + 6 NADPH + 12 H(+) = 6-deoxyerythronolide B + 6 CO2 + 6 NADP(+) + 7 CoA + H2O. Its pathway is antibiotic biosynthesis; erythromycin biosynthesis. With respect to regulation, inhibited by diphenyl phosphonates derivatives such as diphenyl allylphosphonate. Involved in the biosynthesis of antibiotic erythromycin via the biosynthesis of its aglycone precursor, 6-deoxyerythronolide B (6-dEB). The sequence is that of Erythronolide synthase EryA3 from Saccharopolyspora erythraea (Streptomyces erythraeus).